The following is a 439-amino-acid chain: Probable serine/threonine-protein kinase WNK6 (439 aa).

The interval 1–30 (MMPPKPAAEDVADEQPEPPDEDPDVAEADP) is disordered. The segment covering 10–27 (DVADEQPEPPDEDPDVAE) has biased composition (acidic residues). One can recognise a Protein kinase domain in the interval 35-293 (LRYREIIGSG…ASELLKSPFL (259 aa)). Residues 116-119 (TELF) and lysine 166 contribute to the ATP site. The Proton acceptor role is filled by aspartate 183.

It belongs to the protein kinase superfamily. Ser/Thr protein kinase family. WNK subfamily.

The enzyme catalyses L-seryl-[protein] + ATP = O-phospho-L-seryl-[protein] + ADP + H(+). The catalysed reaction is L-threonyl-[protein] + ATP = O-phospho-L-threonyl-[protein] + ADP + H(+). The sequence is that of Probable serine/threonine-protein kinase WNK6 (WNK6) from Oryza sativa subsp. japonica (Rice).